A 368-amino-acid polypeptide reads, in one-letter code: tRNA 2-selenouridine synthase (368 aa).

One can recognise a Rhodanese domain in the interval 15-138; sequence MLSGHPMIDV…MRQYLIEVID (124 aa). Cys-98 (S-selanylcysteine intermediate) is an active-site residue.

It belongs to the SelU family. In terms of assembly, monomer.

It catalyses the reaction 5-methylaminomethyl-2-thiouridine(34) in tRNA + selenophosphate + (2E)-geranyl diphosphate + H2O + H(+) = 5-methylaminomethyl-2-selenouridine(34) in tRNA + (2E)-thiogeraniol + phosphate + diphosphate. It carries out the reaction 5-methylaminomethyl-2-thiouridine(34) in tRNA + (2E)-geranyl diphosphate = 5-methylaminomethyl-S-(2E)-geranyl-thiouridine(34) in tRNA + diphosphate. The catalysed reaction is 5-methylaminomethyl-S-(2E)-geranyl-thiouridine(34) in tRNA + selenophosphate + H(+) = 5-methylaminomethyl-2-(Se-phospho)selenouridine(34) in tRNA + (2E)-thiogeraniol. The enzyme catalyses 5-methylaminomethyl-2-(Se-phospho)selenouridine(34) in tRNA + H2O = 5-methylaminomethyl-2-selenouridine(34) in tRNA + phosphate. Functionally, involved in the post-transcriptional modification of the uridine at the wobble position (U34) of tRNA(Lys), tRNA(Glu) and tRNA(Gln). Catalyzes the conversion of 2-thiouridine (S2U-RNA) to 2-selenouridine (Se2U-RNA). Acts in a two-step process involving geranylation of 2-thiouridine (S2U) to S-geranyl-2-thiouridine (geS2U) and subsequent selenation of the latter derivative to 2-selenouridine (Se2U) in the tRNA chain. The sequence is that of tRNA 2-selenouridine synthase from Shewanella woodyi (strain ATCC 51908 / MS32).